Reading from the N-terminus, the 379-residue chain is Cytochrome b (379 aa).

Transmembrane regions (helical) follow at residues 33–53 (FGSL…FLAM), 77–98 (WLIR…FIHV), 113–133 (WNIG…GYVL), and 178–198 (FFAF…VHLL). Residues histidine 83 and histidine 97 each coordinate heme b. Residues histidine 182 and histidine 196 each contribute to the heme b site. Histidine 201 is a binding site for a ubiquinone. A run of 4 helical transmembrane segments spans residues 226–246 (TKDL…TLFF), 288–308 (LGGV…PLLN), 320–340 (ITQT…WIGG), and 347–367 (FTTI…ILIP).

It belongs to the cytochrome b family. In terms of assembly, the cytochrome bc1 complex contains 11 subunits: 3 respiratory subunits (MT-CYB, CYC1 and UQCRFS1), 2 core proteins (UQCRC1 and UQCRC2) and 6 low-molecular weight proteins (UQCRH/QCR6, UQCRB/QCR7, UQCRQ/QCR8, UQCR10/QCR9, UQCR11/QCR10 and a cleavage product of UQCRFS1). This cytochrome bc1 complex then forms a dimer. The cofactor is heme b.

It localises to the mitochondrion inner membrane. In terms of biological role, component of the ubiquinol-cytochrome c reductase complex (complex III or cytochrome b-c1 complex) that is part of the mitochondrial respiratory chain. The b-c1 complex mediates electron transfer from ubiquinol to cytochrome c. Contributes to the generation of a proton gradient across the mitochondrial membrane that is then used for ATP synthesis. The polypeptide is Cytochrome b (MT-CYB) (Akodon azarae (Azara's grass mouse)).